Consider the following 200-residue polypeptide: ATP-dependent Clp protease proteolytic subunit 2 (200 aa).

The active-site Nucleophile is S101. H126 is an active-site residue.

It belongs to the peptidase S14 family. Fourteen ClpP subunits assemble into 2 heptameric rings which stack back to back to give a disk-like structure with a central cavity, resembling the structure of eukaryotic proteasomes.

The protein localises to the cytoplasm. It carries out the reaction Hydrolysis of proteins to small peptides in the presence of ATP and magnesium. alpha-casein is the usual test substrate. In the absence of ATP, only oligopeptides shorter than five residues are hydrolyzed (such as succinyl-Leu-Tyr-|-NHMec, and Leu-Tyr-Leu-|-Tyr-Trp, in which cleavage of the -Tyr-|-Leu- and -Tyr-|-Trp bonds also occurs).. In terms of biological role, cleaves peptides in various proteins in a process that requires ATP hydrolysis. Has a chymotrypsin-like activity. Plays a major role in the degradation of misfolded proteins. The polypeptide is ATP-dependent Clp protease proteolytic subunit 2 (Prochlorococcus marinus (strain MIT 9313)).